The following is a 412-amino-acid chain: Multifunctional CCA protein (412 aa).

ATP contacts are provided by glycine 8 and arginine 11. CTP-binding residues include glycine 8 and arginine 11. Aspartate 21 and aspartate 23 together coordinate Mg(2+). 3 residues coordinate ATP: arginine 91, arginine 137, and arginine 140. CTP-binding residues include arginine 91, arginine 137, and arginine 140. Residues 228–329 enclose the HD domain; the sequence is TGIHTLMTLS…VKLFDSIDAW (102 aa).

It belongs to the tRNA nucleotidyltransferase/poly(A) polymerase family. Bacterial CCA-adding enzyme type 1 subfamily. In terms of assembly, monomer. Can also form homodimers and oligomers. Mg(2+) serves as cofactor. The cofactor is Ni(2+).

The enzyme catalyses a tRNA precursor + 2 CTP + ATP = a tRNA with a 3' CCA end + 3 diphosphate. It catalyses the reaction a tRNA with a 3' CCA end + 2 CTP + ATP = a tRNA with a 3' CCACCA end + 3 diphosphate. Catalyzes the addition and repair of the essential 3'-terminal CCA sequence in tRNAs without using a nucleic acid template. Adds these three nucleotides in the order of C, C, and A to the tRNA nucleotide-73, using CTP and ATP as substrates and producing inorganic pyrophosphate. tRNA 3'-terminal CCA addition is required both for tRNA processing and repair. Also involved in tRNA surveillance by mediating tandem CCA addition to generate a CCACCA at the 3' terminus of unstable tRNAs. While stable tRNAs receive only 3'-terminal CCA, unstable tRNAs are marked with CCACCA and rapidly degraded. This is Multifunctional CCA protein from Escherichia coli O127:H6 (strain E2348/69 / EPEC).